The following is a 333-amino-acid chain: tRNA-modifying protein YgfZ (333 aa).

Residues tryptophan 33 and tryptophan 195 each contribute to the folate site.

It belongs to the tRNA-modifying YgfZ family.

The protein localises to the cytoplasm. Its function is as follows. Folate-binding protein involved in regulating the level of ATP-DnaA and in the modification of some tRNAs. It is probably a key factor in regulatory networks that act via tRNA modification, such as initiation of chromosomal replication. This Pectobacterium atrosepticum (strain SCRI 1043 / ATCC BAA-672) (Erwinia carotovora subsp. atroseptica) protein is tRNA-modifying protein YgfZ.